Consider the following 490-residue polypeptide: Probable cytosol aminopeptidase (490 aa).

Lys-260 and Asp-265 together coordinate Mn(2+). Lys-272 is a catalytic residue. Residues Asp-284, Asp-343, and Glu-345 each contribute to the Mn(2+) site. Arg-347 is a catalytic residue.

The protein belongs to the peptidase M17 family. Requires Mn(2+) as cofactor.

It is found in the cytoplasm. It catalyses the reaction Release of an N-terminal amino acid, Xaa-|-Yaa-, in which Xaa is preferably Leu, but may be other amino acids including Pro although not Arg or Lys, and Yaa may be Pro. Amino acid amides and methyl esters are also readily hydrolyzed, but rates on arylamides are exceedingly low.. The catalysed reaction is Release of an N-terminal amino acid, preferentially leucine, but not glutamic or aspartic acids.. Its function is as follows. Presumably involved in the processing and regular turnover of intracellular proteins. Catalyzes the removal of unsubstituted N-terminal amino acids from various peptides. This chain is Probable cytosol aminopeptidase, found in Gloeothece citriformis (strain PCC 7424) (Cyanothece sp. (strain PCC 7424)).